The primary structure comprises 360 residues: DNA replication and repair protein RecF (360 aa).

Residue 30–37 (GANGSGKT) participates in ATP binding.

Belongs to the RecF family.

The protein resides in the cytoplasm. Functionally, the RecF protein is involved in DNA metabolism; it is required for DNA replication and normal SOS inducibility. RecF binds preferentially to single-stranded, linear DNA. It also seems to bind ATP. This chain is DNA replication and repair protein RecF, found in Acinetobacter baumannii (strain ATCC 17978 / DSM 105126 / CIP 53.77 / LMG 1025 / NCDC KC755 / 5377).